A 235-amino-acid chain; its full sequence is CD-NTase-associated protein 13 (235 aa).

The next 2 helical transmembrane spans lie at 14 to 34 (IVHH…LIWI) and 45 to 65 (IIFT…IVGL).

This sequence in the C-terminal section; belongs to the bacterial STING family. In terms of assembly, homodimer.

It is found in the cell inner membrane. Functionally, effector protein of a CBASS antivirus system. CBASS (cyclic oligonucleotide-based antiphage signaling system) provides immunity against bacteriophage. The CD-NTase protein synthesizes cyclic nucleotides in response to infection; these serve as specific second messenger signals. The signals activate a diverse range of effectors, leading to bacterial cell death and thus abortive phage infection. A type I-D(GG) CBASS system. Its function is as follows. Binds cyclic dinucleotides: binds c-di-GMP (synthesized by the cognate CdnE encoded upstream in the same operon), cyclic 3'3'-cyclic GMP-AMP (3'3'-cGAMP) but not cUMP-AMP. The effector protein for this CBASS system, its activity is stimulated by c-di-GMP and leads to cell death. This chain is CD-NTase-associated protein 13, found in Flavobacteriaceae sp. genome_bin_11.